The primary structure comprises 380 residues: Cobalt-precorrin-5B C(1)-methyltransferase (380 aa).

The protein belongs to the CbiD family.

The enzyme catalyses Co-precorrin-5B + S-adenosyl-L-methionine = Co-precorrin-6A + S-adenosyl-L-homocysteine. It participates in cofactor biosynthesis; adenosylcobalamin biosynthesis; cob(II)yrinate a,c-diamide from sirohydrochlorin (anaerobic route): step 6/10. In terms of biological role, catalyzes the methylation of C-1 in cobalt-precorrin-5B to form cobalt-precorrin-6A. In Salinispora tropica (strain ATCC BAA-916 / DSM 44818 / JCM 13857 / NBRC 105044 / CNB-440), this protein is Cobalt-precorrin-5B C(1)-methyltransferase.